The primary structure comprises 218 residues: uncharacterized protein (218 aa).

A helical membrane pass occupies residues Ala-11–Ser-31.

It localises to the membrane. This is an uncharacterized protein from Escherichia coli (strain K12).